Here is a 126-residue protein sequence, read N- to C-terminus: Protein LLP homolog (126 aa).

Over residues 1-21 (MAKSLRSKWRRKMRAEKRKKV) the composition is skewed to basic residues. Disordered regions lie at residues 1 to 22 (MAKSLRSKWRRKMRAEKRKKVA) and 53 to 126 (VPPE…RLAW). Residues 73-94 (DGGKMDLDTKRNKKTMLDEHGR) show a composition bias toward basic and acidic residues. A compositionally biased stretch (basic residues) spans 103 to 126 (QAKKLKAKRVGKNGKPKPKKRLAW).

It belongs to the learning-associated protein family.

It is found in the nucleus. It localises to the nucleolus. The protein resides in the chromosome. Regulates dendritic and spine growth and synaptic transmission. This Danio rerio (Zebrafish) protein is Protein LLP homolog (llph).